The primary structure comprises 188 residues: MAEGHGDANGATAHTAADGGHKAPFPPFQKDTFASQLVSLLIAFVALYLIVSKIALPRVGSVLDERAKRIEDDFAAAQRLKGESDDALKAYETELAQARARAQAIGAETRERLNAASEAERKSLEEKLAVKLAEAEKTIAATRETAMSNVRGIAADAAAAIVQQLSGLVPDGKALDRAVDATLKGSQA.

The segment at 1–23 (MAEGHGDANGATAHTAADGGHKA) is disordered. Over residues 8–18 (ANGATAHTAAD) the composition is skewed to low complexity. The chain crosses the membrane as a helical span at residues 37–57 (LVSLLIAFVALYLIVSKIALP).

The protein belongs to the ATPase B chain family. F-type ATPases have 2 components, F(1) - the catalytic core - and F(0) - the membrane proton channel. F(1) has five subunits: alpha(3), beta(3), gamma(1), delta(1), epsilon(1). F(0) has three main subunits: a(1), b(2) and c(10-14). The alpha and beta chains form an alternating ring which encloses part of the gamma chain. F(1) is attached to F(0) by a central stalk formed by the gamma and epsilon chains, while a peripheral stalk is formed by the delta and b chains.

It localises to the cell inner membrane. Functionally, f(1)F(0) ATP synthase produces ATP from ADP in the presence of a proton or sodium gradient. F-type ATPases consist of two structural domains, F(1) containing the extramembraneous catalytic core and F(0) containing the membrane proton channel, linked together by a central stalk and a peripheral stalk. During catalysis, ATP synthesis in the catalytic domain of F(1) is coupled via a rotary mechanism of the central stalk subunits to proton translocation. Component of the F(0) channel, it forms part of the peripheral stalk, linking F(1) to F(0). The b'-subunit is a diverged and duplicated form of b found in plants and photosynthetic bacteria. This is ATP synthase subunit b 2 (atpF2) from Rhodopseudomonas palustris (strain BisB18).